The sequence spans 115 residues: Hydrogenase maturation factor HypA (115 aa).

Ni(2+) is bound at residue His-2. Cys-73, Cys-76, Cys-89, and Cys-92 together coordinate Zn(2+).

This sequence belongs to the HypA/HybF family.

Its function is as follows. Involved in the maturation of [NiFe] hydrogenases. Required for nickel insertion into the metal center of the hydrogenase. The protein is Hydrogenase maturation factor HypA of Shewanella halifaxensis (strain HAW-EB4).